We begin with the raw amino-acid sequence, 287 residues long: MALFSKKDKYIRINPNRASREKPQAKPEVPDELFSKCPGCKHTIYQKDLGNDSVCPNCGYNFRISAHERLNLTVDENSFEEMFTGIETKDPLNFPNYQEKLALTREKTGLDEAVLTGTASIKGHKTALGIMDSNFIMASMGTVVGEKITRLFEYATEHKLPVVLFTASGGARMQEGIMSLMQMAKVSAAVQRHSAAGLFYLTVLTDPTTGGVTASFAMEGDIILAETQALVGFAGRRVIESTVREKLPDDFQKAEFLMEHGFVDAIVKRGDMRDTLATLLAFHGGQA.

The CoA carboxyltransferase N-terminal domain occupies 33–287 (LFSKCPGCKH…TLLAFHGGQA (255 aa)). Zn(2+)-binding residues include C37, C40, C55, and C58. A C4-type zinc finger spans residues 37-58 (CPGCKHTIYQKDLGNDSVCPNC).

This sequence belongs to the AccD/PCCB family. As to quaternary structure, acetyl-CoA carboxylase is a heterohexamer composed of biotin carboxyl carrier protein (AccB), biotin carboxylase (AccC) and two subunits each of ACCase subunit alpha (AccA) and ACCase subunit beta (AccD). The cofactor is Zn(2+).

The protein resides in the cytoplasm. The catalysed reaction is N(6)-carboxybiotinyl-L-lysyl-[protein] + acetyl-CoA = N(6)-biotinyl-L-lysyl-[protein] + malonyl-CoA. It functions in the pathway lipid metabolism; malonyl-CoA biosynthesis; malonyl-CoA from acetyl-CoA: step 1/1. Component of the acetyl coenzyme A carboxylase (ACC) complex. Biotin carboxylase (BC) catalyzes the carboxylation of biotin on its carrier protein (BCCP) and then the CO(2) group is transferred by the transcarboxylase to acetyl-CoA to form malonyl-CoA. The sequence is that of Acetyl-coenzyme A carboxylase carboxyl transferase subunit beta from Streptococcus sanguinis (strain SK36).